We begin with the raw amino-acid sequence, 215 residues long: MKYQLTALEARVIGCLLEKQVTTPEQYPLSVNGVVTACNQKTNREPVMNLSESEVQEQLDNLVKRHYLRTVSGFGNRVTKYEQRFCNSEFGDLKLSAAEVALITTLLLRGAQTPGELRSRAARMYEFSDMAEVESTLEQLANREDGPFVVRLAREPGKRESRYMHLFSGEVEDQPAVTDMSNAVDGDLQARVEALEIEVAELKQRLDSLLAHQGD.

N6-acetyllysine is present on Lys80.

The protein belongs to the UPF0502 family.

The protein is UPF0502 protein YceH of Escherichia coli O7:K1 (strain IAI39 / ExPEC).